Here is a 375-residue protein sequence, read N- to C-terminus: S-(hydroxymethyl)glutathione dehydrogenase (375 aa).

Cys-40 lines the Zn(2+) pocket. Residue His-41 participates in NAD(+) binding. Residues His-62, Glu-63, Cys-92, Cys-95, Cys-98, Cys-106, and Cys-170 each contribute to the Zn(2+) site. Residues 195–200 (GLGGIG), Asp-219, 293–295 (IGV), and 318–320 (TAF) each bind NAD(+).

Belongs to the zinc-containing alcohol dehydrogenase family. Class-III subfamily. In terms of assembly, homotetramer. The cofactor is Zn(2+).

The enzyme catalyses a primary alcohol + NAD(+) = an aldehyde + NADH + H(+). It carries out the reaction a secondary alcohol + NAD(+) = a ketone + NADH + H(+). It catalyses the reaction S-(hydroxymethyl)glutathione + NADP(+) = S-formylglutathione + NADPH + H(+). The catalysed reaction is S-(hydroxymethyl)glutathione + NAD(+) = S-formylglutathione + NADH + H(+). The enzyme catalyses S-nitrosoglutathione + NADH + H(+) = S-(hydroxysulfenamide)glutathione + NAD(+). Oxidizes long-chain alcohols and, in the presence of glutathione, is able to oxidize formaldehyde. Also acts as a S-nitroso-glutathione reductase by catalyzing the NADH-dependent reduction of S-nitrosoglutathione, thereby regulating protein S-nitrosylation. In Paracoccus denitrificans, this protein is S-(hydroxymethyl)glutathione dehydrogenase (flhA).